The chain runs to 399 residues: Lipoyl synthase, mitochondrial (399 aa).

The transit peptide at 1–14 (MALISRSCGAASRY) directs the protein to the mitochondrion. The segment covering 39–52 (AASTSSSSSPSPST) has biased composition (low complexity). A disordered region spans residues 39-60 (AASTSSSSSPSPSTHNDRKKDL). The [4Fe-4S] cluster site is built by cysteine 128, cysteine 133, cysteine 139, cysteine 159, cysteine 163, cysteine 166, and serine 374. One can recognise a Radical SAM core domain in the interval 144-363 (EYATATATIM…EKVGQEMGFI (220 aa)).

This sequence belongs to the radical SAM superfamily. Lipoyl synthase family. The cofactor is [4Fe-4S] cluster.

It localises to the mitochondrion. It catalyses the reaction [[Fe-S] cluster scaffold protein carrying a second [4Fe-4S](2+) cluster] + N(6)-octanoyl-L-lysyl-[protein] + 2 oxidized [2Fe-2S]-[ferredoxin] + 2 S-adenosyl-L-methionine + 4 H(+) = [[Fe-S] cluster scaffold protein] + N(6)-[(R)-dihydrolipoyl]-L-lysyl-[protein] + 4 Fe(3+) + 2 hydrogen sulfide + 2 5'-deoxyadenosine + 2 L-methionine + 2 reduced [2Fe-2S]-[ferredoxin]. Its pathway is protein modification; protein lipoylation via endogenous pathway; protein N(6)-(lipoyl)lysine from octanoyl-[acyl-carrier-protein]: step 2/2. Catalyzes the radical-mediated insertion of two sulfur atoms into the C-6 and C-8 positions of the octanoyl moiety bound to the lipoyl domains of lipoate-dependent enzymes, thereby converting the octanoylated domains into lipoylated derivatives. The polypeptide is Lipoyl synthase, mitochondrial (lias) (Danio rerio (Zebrafish)).